The sequence spans 102 residues: Large ribosomal subunit protein uL24 (102 aa).

The protein belongs to the universal ribosomal protein uL24 family. Part of the 50S ribosomal subunit.

In terms of biological role, one of two assembly initiator proteins, it binds directly to the 5'-end of the 23S rRNA, where it nucleates assembly of the 50S subunit. Functionally, one of the proteins that surrounds the polypeptide exit tunnel on the outside of the subunit. The sequence is that of Large ribosomal subunit protein uL24 from Ralstonia nicotianae (strain ATCC BAA-1114 / GMI1000) (Ralstonia solanacearum).